A 478-amino-acid chain; its full sequence is GMP reductase (478 aa).

2 CBS domains span residues 95 to 152 and 153 to 211; these read VVDT…VRDI and ALSD…AVDA. Residues 245-247 and 295-297 contribute to the NADP(+) site; these read DTA and GVG. The Thioimidate intermediate role is filled by cysteine 302.

The protein belongs to the IMPDH/GMPR family. GuaB1 subfamily. As to quaternary structure, homooctamer composed of two tetramers. The oligomerization state is regulated by ligands and pH. It depends on a monovalent cation as a cofactor.

It carries out the reaction IMP + NH4(+) + NADP(+) = GMP + NADPH + 2 H(+). It functions in the pathway purine metabolism; IMP biosynthesis via salvage pathway. With respect to regulation, activity is allosterically regulated by the ATP/GTP ratio in a pH-dependent manner. At pH 7.8, GTP has only a minor positive effect and ATP only a minor negative effect on the activity, however, at lower pH values, the effects of ATP and GTP increase. ATP-dependent inhibition can be restored by increasing GTP concentration. IMP and XMP are competitive inhibitors. Functionally, involved in the purine-salvage pathway. Catalyzes the NADPH-dependent conversion of GMP to IMP. Is not essential for viability, but may contribute to the regulation of the purine nucleotide pool by recycling GMP to IMP. The polypeptide is GMP reductase (Mycolicibacterium smegmatis (strain ATCC 700084 / mc(2)155) (Mycobacterium smegmatis)).